The chain runs to 481 residues: Phloretin 4'-O-glucosyltransferase (481 aa).

H16 (proton acceptor) is an active-site residue. H16 serves as a coordination point for an anthocyanidin. Residues Q354, H369, W372, N373, S374, E377, D393, and Q394 each coordinate UDP-alpha-D-glucose.

This sequence belongs to the UDP-glycosyltransferase family. As to expression, highly expressed in young leaves, at intermediate level in mature leaves and at low levels in flowers and fruits.

The catalysed reaction is phloretin + UDP-alpha-D-glucose = trilobatin + UDP + H(+). It carries out the reaction (2S)-naringenin + UDP-alpha-D-glucose = (2S)-naringenin 7-O-beta-D-glucoside + UDP + H(+). Its function is as follows. Glycosyltransferase that possesses phloretin 4'-O-glycosyltransferase activity. Converts phloretin to trilobatin (phloretin 4'-O-glucoside), a potential antioxidant. Can convert with low efficiency phlorizin and trilobatin to their corresponding di-O-glucosides. Can convert with low efficiency naringenin to naringenin-7-O-glucoside. Can convert with low efficiency quercetin to quercetin-7-O-glucoside. This Malus domestica (Apple) protein is Phloretin 4'-O-glucosyltransferase.